The sequence spans 712 residues: MWSSIENMKANLHKIVLDVHEDDEEEDDLHKYGSANGVSNSDRRNSSGFRSVSRYSISNGIESPAHHEIERYKAEIKKLQESESDIKALSVNYAALLREKEDQISRLNQENGSLKQNLTSTSAALKEARTDISRGSNNYAIKGNNDQSPNRLHKSVSHLKSPNHMSNGKGKDTDSFIKEKDLADMLEDRTKSMAAVQATELAKEREKLRDFQLSLQEERKRSESFKEELESMRLDKNKTSMEISKMRSELDAKLLEIKHLQMKLTGQESHAIGPGMEHLKEVNKALEKENNELKLKRSELEAALEESRKLTNSKVFPDATESLTRHPSTLDKEKPESFPGKEEMEQSLQRLEMDLKETQRERDKARQELKRLKQHLLEKETEESEKMDEDSRLIEELRQTNEYQRSQISHLEKSLKQAISNQEDNRLSNDNQIRKLKDTVDDLNQKLTNCLRTIESKNVELLNLQTALGQYYAEIEAKEHFERELAMAKDELMKLSARLKDSDERLESSNKEKEDVTSKLLHAEKVAAEWKNRVTKVEEDNAKVRRVLEQSMTRLNRMSMESDYLVDRRIVIKLLVTYFQKNHNKEVLDLMVRMLGFSEEDKERIGAAKQGGGKGVVRGVLGFPGRFVGGILGGKSAELHANAASDNQSFADLWVDFLLKDAEERERREAEEAAASKAKQDSERTRQEAALHDSEFSTVPLRSSESNQRLSR.

The segment at aspartate 23 to phenylalanine 49 is disordered. Polar residues predominate over residues asparagine 36–phenylalanine 49. Positions alanine 65 to arginine 134 form a coiled coil. The span at glycine 135 to asparagine 150 shows a compositional bias: polar residues. Disordered regions lie at residues glycine 135–phenylalanine 176 and glutamate 306–serine 347. Coiled-coil stretches lie at residues glutamine 197–serine 313, glycine 340–methionine 558, and leucine 659–alanine 690. Residues serine 328–methionine 344 are compositionally biased toward basic and acidic residues. One can recognise a GRIP domain in the interval arginine 557–alanine 608. Positions glutamate 666–arginine 712 are disordered. Positions alanine 678 to glutamate 695 are enriched in basic and acidic residues. Residues phenylalanine 696–arginine 712 show a composition bias toward polar residues.

In terms of assembly, interacts with ARF1; preferentially with the active form of the protein.

The protein localises to the golgi apparatus. It localises to the endosome. Golgi matrix protein playing a role in tethering of vesicles to Golgi membranes and in maintaining the overall structure of the Golgi apparatus. The polypeptide is Golgin candidate 3 (GC3) (Arabidopsis thaliana (Mouse-ear cress)).